A 564-amino-acid polypeptide reads, in one-letter code: Phosphoinositide phospholipase C 3 (564 aa).

Residues 19-54 (TRQPPVSIKRLFEAYSRNGKMSFDELLRFVSEVQGE) form the EF-hand domain. The PI-PLC X-box domain occupies 106 to 250 (HDMKAPLSHY…LKGKILISTK (145 aa)). Residues His-121 and His-167 contribute to the active site. The 117-residue stretch at 296 to 412 (RDLIAIHAAN…GYVKKPRILL (117 aa)) folds into the PI-PLC Y-box domain. The C2 domain maps to 406–539 (KKPRILLDEH…KSGVRAVRLH (134 aa)). Residues Asp-450, Asp-456, Asp-509, Asp-511, and Asp-517 each contribute to the Ca(2+) site.

Ca(2+) serves as cofactor. As to expression, expressed in leaves, roots and siliques, but not in flowers.

It is found in the cell membrane. It catalyses the reaction a 1,2-diacyl-sn-glycero-3-phospho-(1D-myo-inositol-4,5-bisphosphate) + H2O = 1D-myo-inositol 1,4,5-trisphosphate + a 1,2-diacyl-sn-glycerol + H(+). Functionally, the production of the second messenger molecules diacylglycerol (DAG) and inositol 1,4,5-trisphosphate (IP3) is mediated by activated phosphatidylinositol-specific phospholipase C enzymes. This chain is Phosphoinositide phospholipase C 3 (PLC3), found in Arabidopsis thaliana (Mouse-ear cress).